Reading from the N-terminus, the 144-residue chain is Large ribosomal subunit protein uL16 (144 aa).

It belongs to the universal ribosomal protein uL16 family. Part of the 50S ribosomal subunit.

In terms of biological role, binds 23S rRNA and is also seen to make contacts with the A and possibly P site tRNAs. This Thermoanaerobacter pseudethanolicus (strain ATCC 33223 / 39E) (Clostridium thermohydrosulfuricum) protein is Large ribosomal subunit protein uL16.